The chain runs to 28 residues: Basic phospholipase A2 homolog BmatTX-II (28 aa).

As to quaternary structure, monomer. As to expression, expressed by the venom gland.

It localises to the secreted. Snake venom phospholipase A2 homolog that lacks enzymatic activity. Shows high myotoxic activity, neutrophil activation (demonstrated by activation induction of IL-1beta production), and slight cytotoxicity against Jurkat (leukemia T) and SK-BR-3 (breast adenocarcinoma) tumor cell lines. A model of myotoxic mechanism has been proposed: an apo Lys49-PLA2 is activated by the entrance of a hydrophobic molecule (e.g. fatty acid) at the hydrophobic channel of the protein leading to a reorientation of a monomer. This reorientation causes a transition between 'inactive' to 'active' states, causing alignment of C-terminal and membrane-docking sites (MDoS) side-by-side and putting the membrane-disruption sites (MDiS) in the same plane, exposed to solvent and in a symmetric position for both monomers. The MDoS region stabilizes the toxin on membrane by the interaction of charged residues with phospholipid head groups. Subsequently, the MDiS region destabilizes the membrane with penetration of hydrophobic residues. This insertion causes a disorganization of the membrane, allowing an uncontrolled influx of ions (i.e. calcium and sodium), and eventually triggering irreversible intracellular alterations and cell death. This Bothrops mattogrossensis (Pitviper) protein is Basic phospholipase A2 homolog BmatTX-II.